We begin with the raw amino-acid sequence, 147 residues long: MAIVYLSLGSNLGDRHSLLSAALEMLQTRVGRLLTLSRFYETEPWGFESPHPFLNAVVALRSELKPQDILHITQAIERELGRTQKSNGGVYHDRPIDIDILLHSVYPKVQSPELELPHPQMWQRDFVRMPLSDVAPWLHPEAPTPNL.

Belongs to the HPPK family.

The enzyme catalyses 6-hydroxymethyl-7,8-dihydropterin + ATP = (7,8-dihydropterin-6-yl)methyl diphosphate + AMP + H(+). The protein operates within cofactor biosynthesis; tetrahydrofolate biosynthesis; 2-amino-4-hydroxy-6-hydroxymethyl-7,8-dihydropteridine diphosphate from 7,8-dihydroneopterin triphosphate: step 4/4. Functionally, catalyzes the transfer of pyrophosphate from adenosine triphosphate (ATP) to 6-hydroxymethyl-7,8-dihydropterin, an enzymatic step in folate biosynthesis pathway. This chain is 2-amino-4-hydroxy-6-hydroxymethyldihydropteridine pyrophosphokinase (folK), found in Porphyromonas gingivalis (strain ATCC 33277 / DSM 20709 / CIP 103683 / JCM 12257 / NCTC 11834 / 2561).